A 128-amino-acid chain; its full sequence is Large ribosomal subunit protein bL17 (128 aa).

The protein belongs to the bacterial ribosomal protein bL17 family. In terms of assembly, part of the 50S ribosomal subunit. Contacts protein L32.

In Pseudomonas entomophila (strain L48), this protein is Large ribosomal subunit protein bL17.